A 154-amino-acid chain; its full sequence is Myoglobin (154 aa).

In terms of domain architecture, Globin spans 2-148 (GLSDDEWNHV…FRNDMASKYK (147 aa)). Nitrite is bound at residue His-65. O2 is bound at residue His-65. Position 94 (His-94) interacts with heme b.

Belongs to the globin family. In terms of assembly, monomeric.

Its subcellular location is the cytoplasm. The protein resides in the sarcoplasm. It carries out the reaction Fe(III)-heme b-[protein] + nitric oxide + H2O = Fe(II)-heme b-[protein] + nitrite + 2 H(+). The catalysed reaction is H2O2 + AH2 = A + 2 H2O. Monomeric heme protein which primary function is to store oxygen and facilitate its diffusion within muscle tissues. Reversibly binds oxygen through a pentacoordinated heme iron and enables its timely and efficient release as needed during periods of heightened demand. Depending on the oxidative conditions of tissues and cells, and in addition to its ability to bind oxygen, it also has a nitrite reductase activity whereby it regulates the production of bioactive nitric oxide. Under stress conditions, like hypoxia and anoxia, it also protects cells against reactive oxygen species thanks to its pseudoperoxidase activity. This is Myoglobin (MB) from Caretta caretta (Loggerhead sea turtle).